The primary structure comprises 472 residues: UDP-glycosyltransferase 100 (472 aa).

Catalysis depends on H15, which acts as the Proton acceptor. H15 serves as a coordination point for an anthocyanidin. Catalysis depends on D117, which acts as the Charge relay. Residues A344, Q346, H361, W364, N365, S366, and E369 each contribute to the UDP-alpha-D-glucose site. An anthocyanidin is bound at residue G384. 2 residues coordinate UDP-alpha-D-glucose: E385 and Q386.

It belongs to the UDP-glycosyltransferase family.

It catalyses the reaction (20S)-protopanaxadiol + UDP-alpha-D-glucose = (20S)-ginsenoside C-K + UDP + H(+). It carries out the reaction (20S)-protopanaxatriol + UDP-alpha-D-glucose = (20S)-ginsenoside Rh1 + UDP + H(+). The enzyme catalyses (20S)-ginsenoside F1 + UDP-alpha-D-glucose = (20S)-ginsenoside Rg1 + UDP + H(+). It participates in secondary metabolite biosynthesis; terpenoid biosynthesis. In terms of biological role, component of the dammarane-type triterpene saponins (e.g. PPT-type ginsenosides or panaxosides) biosynthetic pathway. Glycosyltransferase that catalyzes the biosynthesis of ginsenoside Rh1 from protopanaxatriol (PPT) and the conversion of ginsenoside F1 to ginsenoside Rg1. This chain is UDP-glycosyltransferase 100, found in Panax ginseng (Korean ginseng).